A 301-amino-acid chain; its full sequence is Ribosomal RNA large subunit methyltransferase F (301 aa).

This sequence belongs to the methyltransferase superfamily. METTL16/RlmF family.

It is found in the cytoplasm. It carries out the reaction adenosine(1618) in 23S rRNA + S-adenosyl-L-methionine = N(6)-methyladenosine(1618) in 23S rRNA + S-adenosyl-L-homocysteine + H(+). Its function is as follows. Specifically methylates the adenine in position 1618 of 23S rRNA. The polypeptide is Ribosomal RNA large subunit methyltransferase F (Colwellia psychrerythraea (strain 34H / ATCC BAA-681) (Vibrio psychroerythus)).